A 406-amino-acid polypeptide reads, in one-letter code: (R)-benzylsuccinyl-CoA dehydrogenase (406 aa).

The protein belongs to the acyl-CoA dehydrogenase family. As to quaternary structure, homotetramer. The cofactor is FAD.

It carries out the reaction (R)-2-benzylsuccinyl-CoA + oxidized [electron-transfer flavoprotein] + H(+) = (E)-2-benzylidenesuccinyl-CoA + reduced [electron-transfer flavoprotein]. The protein operates within xenobiotic degradation; toluene degradation. Its activity is regulated as follows. Inhibited by (S)-benzylsuccinyl-CoA. Functionally, catalyzes the oxidation of benzylsuccinyl-CoA to benzylidenesuccinyl-CoA. In Thauera aromatica, this protein is (R)-benzylsuccinyl-CoA dehydrogenase (bbsG).